A 198-amino-acid chain; its full sequence is GDP-mannose pyrophosphatase (198 aa).

GDP-alpha-D-mannose-binding positions include 38-40 (KRE), Arg67, and 85-87 (AGL). The 138-residue stretch at 43-180 (DRGNGATVLL…EIRDGKAVIL (138 aa)) folds into the Nudix hydrolase domain. The Mg(2+) site is built by Ala85, Glu100, and Glu104. The short motif at 86–106 (GLLDNDEPEACIRKEAVEETG) is the Nudix box element. Residues Glu104, Glu127, 150 to 151 (DE), and Lys176 each bind GDP-alpha-D-mannose. Glu151 is a Mg(2+) binding site.

It belongs to the Nudix hydrolase family. NudK subfamily. In terms of assembly, homodimer. Mg(2+) serves as cofactor.

The catalysed reaction is GDP-alpha-D-mannose + H2O = alpha-D-mannose 1-phosphate + GMP + 2 H(+). Its function is as follows. Nucleoside diphosphate sugar hydrolase that hydrolyzes GDP-mannose as its preferred substrate, yielding GMP and mannose-1-phosphate. This Klebsiella pneumoniae subsp. pneumoniae (strain ATCC 700721 / MGH 78578) protein is GDP-mannose pyrophosphatase (nudK).